We begin with the raw amino-acid sequence, 327 residues long: Diacylglycerol acyltransferase/mycolyltransferase Ag85B (327 aa).

The signal sequence occupies residues 1–38 (MIDVSGKIRAWGRWLLVGAAATLPSLISLAGGAATASA). A substrate-binding site is contributed by 80 to 81 (LR). The interval 96–106 (FEWYYQSGLSV) is fibronectin-binding. Residues cysteine 125 and cysteine 130 are joined by a disulfide bond. Positions 164 and 192 each coordinate substrate. Serine 164 serves as the catalytic Nucleophile. Glutamate 268 is an active-site residue. Residues 270 to 273 (FVHG), lysine 277, and 300 to 302 (HSW) contribute to the substrate site. Residue histidine 300 is part of the active site.

The protein belongs to the mycobacterial A85 antigen family.

It localises to the secreted. The enzyme catalyses 2 alpha,alpha'-trehalose 6-mycolate = alpha,alpha'-trehalose 6,6'-bismycolate + alpha,alpha-trehalose. It catalyses the reaction an acyl-CoA + a 1,2-diacyl-sn-glycerol = a triacyl-sn-glycerol + CoA. Its function is as follows. The antigen 85 proteins (FbpA, FbpB, FbpC) are responsible for the high affinity of mycobacteria for fibronectin, a large adhesive glycoprotein, which facilitates the attachment of M.tuberculosis to murine alveolar macrophages (AMs). They also help to maintain the integrity of the cell wall by catalyzing the transfer of mycolic acids to cell wall arabinogalactan and through the synthesis of alpha,alpha-trehalose dimycolate (TDM, cord factor). They catalyze the transfer of a mycoloyl residue from one molecule of alpha,alpha-trehalose monomycolate (TMM) to another TMM, leading to the formation of TDM. The polypeptide is Diacylglycerol acyltransferase/mycolyltransferase Ag85B (fbpB) (Mycobacterium leprae (strain TN)).